The chain runs to 665 residues: MVSTTLATITIMSTLVGYTTGPLTDYMWLLIVGFIIAFVLAFSVGANDVANSFGTAVGSGVVTLRQACILASIFETLGSVLLGAKVSETIRKGIIDVTMYKDIEHVLMAGSVSAMFGSAVWQLAASFLKLPISGTHCIVGATIGFSLVAKGQQGVKWLELLRIVASWFLSPLLSGVMSAVLFYFVRMFILQKKDPVPNGLRALPFFYAVTMGINLFSIMFTGAPMLGFDKLPWWGVLLISIGFGIITALIVWFAVCPRLKKKIECEVKSSSPSESPLMEKRELHEAHSPILKPVPEESSVLSSSTPTTPPLPPPEERRVTFDIGDSDDADQKDCKESDLGGAPKTAHVHFTNGPAHIPSNGYSQYHTVHKDSGLYKDLLHKLHLAKVGDCMGEGGDRPIRRNNSYTSYTMAIIGMHGDFKPKESEFRASEDGDKEKAGAQERKRIRMDSYTSYCNAVAENGTPEDLGEGEVTLEMVDEDAGSSRSSLEEDRTDADKPEVSMLFQFLQILTACFGSFAHGGNDVSNAIGPLVALWLVYESGSVISSAPTPIWLLLYGGVGICVGLWVWGRRVIQTMGRDLTPITPSSGFSIELASAVTVVVASNIGLPVSTTHCKVGSVVAVGWLRSRKAVDWRLFRNIFMAWFVTVPISGLISAAIMALFNYVIL.

The next 6 helical transmembrane spans lie at 26–46 (YMWL…SVGA), 67–87 (ACIL…AKVS), 107–127 (LMAG…AASF), 163–183 (IVAS…VLFY), 202–222 (ALPF…MFTG), and 235–255 (GVLL…WFAV). Disordered stretches follow at residues 294–345 (VPEE…APKT) and 423–442 (ESEF…AQER). A compositionally biased stretch (low complexity) spans 296–306 (EESSVLSSSTP). The span at 329–338 (ADQKDCKESD) shows a compositional bias: basic and acidic residues. The next 4 membrane-spanning stretches (helical) occupy residues 499-519 (VSML…FAHG), 548-568 (TPIW…WVWG), 588-608 (FSIE…GLPV), and 638-658 (IFMA…AIMA).

This sequence belongs to the inorganic phosphate transporter (PiT) (TC 2.A.20) family.

It is found in the membrane. In terms of biological role, sodium-phosphate symporter which plays a fundamental housekeeping role in phosphate transport. The polypeptide is Sodium-dependent phosphate transporter 1-B (slc20a1b) (Danio rerio (Zebrafish)).